The sequence spans 428 residues: Trigger factor (428 aa).

The region spanning 163–248 (KDIVTIDFEG…VKEIKAKELP (86 aa)) is the PPIase FKBP-type domain.

It belongs to the FKBP-type PPIase family. Tig subfamily.

It localises to the cytoplasm. The catalysed reaction is [protein]-peptidylproline (omega=180) = [protein]-peptidylproline (omega=0). Functionally, involved in protein export. Acts as a chaperone by maintaining the newly synthesized protein in an open conformation. Functions as a peptidyl-prolyl cis-trans isomerase. This chain is Trigger factor, found in Lachnoclostridium phytofermentans (strain ATCC 700394 / DSM 18823 / ISDg) (Clostridium phytofermentans).